A 529-amino-acid polypeptide reads, in one-letter code: Listeriolysin O (529 aa).

A signal peptide spans 1–24; the sequence is MKKIMLVFITLILISLPIAQQTEA. The tract at residues 35–54 is disordered; that stretch reads SISSMAPPASPPASPKTPIE. Transmembrane regions (beta stranded) follow at residues 214–227, 234–243, 312–321, and 329–341; these read ESQL…AFKA, VNFGAISEGK, STKVKAAFDA, and SGDV…IKNS. The short motif at 483–493 is the Conserved undecapeptide element; that stretch reads ECTGLAWEWWR. A Cholesterol binding motif is present at residues 515–516; the sequence is TL.

This sequence belongs to the cholesterol-dependent cytolysin family. As to quaternary structure, homooligomeric pore complex of 35 to 50 subunits; when inserted in the host membrane.

Its subcellular location is the secreted. It localises to the host membrane. The protein resides in the host cell membrane. Activity of listeriolysin O is regulated on multiple levels. It should be high in the phagosome, thereby allowing escape of the bacteria from the phagosomal compartment. Then, once inside the host cytosol, the activity must be controlled to prevent lysis of the host plasma membrane and loss of the intracellular environment. Its function is as follows. A cholesterol-dependent toxin that causes cytolysis by forming pores in cholesterol containing host membranes. After binding to target membranes, the protein undergoes a major conformation change, leading to its insertion in the host membrane and formation of an oligomeric pore complex. Cholesterol is required for binding to host membranes, membrane insertion and pore formation; cholesterol binding is mediated by a Thr-Leu pair in the C-terminus. Acts as a major virulence factor required for the escape of bacteria from phagosomal vacuoles and entry into the host cytosol. Can be reversibly inactivated by oxidation. The protein is Listeriolysin O (hly) of Listeria monocytogenes serotype 4a (strain HCC23).